We begin with the raw amino-acid sequence, 72 residues long: Protein kish-A (72 aa).

Residues 1–26 (MSAIFNFQSLLTVILLLICTCAYIRS) form the signal peptide. Over 27 to 53 (LAPSLLDRNKTGLLGIFWKCARIGERK) the chain is Extracellular. A glycan (N-linked (GlcNAc...) asparagine) is linked at Asn35. A helical membrane pass occupies residues 54–71 (SPYVAVCCIVMAFSILFI). Position 72 (Gln72) is a topological domain, cytoplasmic.

The protein belongs to the KISH family.

The protein resides in the golgi apparatus membrane. Functionally, involved in the early part of the secretory pathway. The sequence is that of Protein kish-A (TMEM167A) from Bos taurus (Bovine).